Here is a 421-residue protein sequence, read N- to C-terminus: BEN domain-containing protein 5 (421 aa).

Position 133 is an N6-acetyllysine (K133). Residues 180-243 (RALYEELLRN…LNRRLQDVLL (64 aa)) are a coiled coil. K258 is covalently cross-linked (Glycyl lysine isopeptide (Lys-Gly) (interchain with G-Cter in SUMO2)). Residues 302-408 (GSGIWVDEEK…EKIMDINKSC (107 aa)) enclose the BEN domain.

Its function is as follows. Acts as a transcriptional repressor. The sequence is that of BEN domain-containing protein 5 (Bend5) from Mus musculus (Mouse).